The following is a 283-amino-acid chain: 4-diphosphocytidyl-2-C-methyl-D-erythritol kinase (283 aa).

K9 is an active-site residue. 93–103 is a binding site for ATP; sequence PIAAGLAGGSS. D135 is an active-site residue.

The protein belongs to the GHMP kinase family. IspE subfamily.

The catalysed reaction is 4-CDP-2-C-methyl-D-erythritol + ATP = 4-CDP-2-C-methyl-D-erythritol 2-phosphate + ADP + H(+). It participates in isoprenoid biosynthesis; isopentenyl diphosphate biosynthesis via DXP pathway; isopentenyl diphosphate from 1-deoxy-D-xylulose 5-phosphate: step 3/6. In terms of biological role, catalyzes the phosphorylation of the position 2 hydroxy group of 4-diphosphocytidyl-2C-methyl-D-erythritol. This chain is 4-diphosphocytidyl-2-C-methyl-D-erythritol kinase, found in Macrococcus caseolyticus (strain JCSC5402) (Macrococcoides caseolyticum).